The primary structure comprises 231 residues: NADH-ubiquinone oxidoreductase chain 4 (231 aa).

Helical transmembrane passes span 1 to 21 (PIAGSMVLAAILLKLGGYGII), 34 to 54 (MFLPFIVLALWGAILANLTCL), 63 to 85 (IAYSSISHMGLVVAAIIIQTPWG), 89 to 111 (AMALMIAHGFTSSALFCLANTTY), 128 to 148 (ILPMTTTWWLFVNLMNIAIPP), and 169 to 189 (TIIMLGLSMLITASYSLHMFL).

This sequence belongs to the complex I subunit 4 family.

It localises to the mitochondrion membrane. The enzyme catalyses a ubiquinone + NADH + 5 H(+)(in) = a ubiquinol + NAD(+) + 4 H(+)(out). Core subunit of the mitochondrial membrane respiratory chain NADH dehydrogenase (Complex I) that is believed to belong to the minimal assembly required for catalysis. Complex I functions in the transfer of electrons from NADH to the respiratory chain. The immediate electron acceptor for the enzyme is believed to be ubiquinone. This is NADH-ubiquinone oxidoreductase chain 4 (MT-ND4) from Deinagkistrodon acutus (Hundred-pace snake).